The primary structure comprises 189 residues: FUN14 domain-containing protein 2 (189 aa).

Over 1 to 80 (METSAPRAGS…GQESGPSAEK (80 aa)) the chain is Cytoplasmic. Phosphoserine is present on residues Ser10 and Ser53. A helical transmembrane segment spans residues 81-101 (YSVATQLFIGGVTGWCTGFIF). Topologically, residues 102 to 107 (QKVGKL) are mitochondrial intermembrane. Residues 108-128 (AATAVGGGFFLLQLANHTGYI) form a helical membrane-spanning segment. The Cytoplasmic segment spans residues 129-164 (KVDWQRVEKDMKKAKEQLKIRKSNQIPTEVRSKAEE). Ser151 carries the post-translational modification Phosphoserine. A helical membrane pass occupies residues 165-185 (VVSFVKKNVLVTGGFFGGFLL). Over 186–189 (GMAS) the chain is Mitochondrial intermembrane.

The protein belongs to the FUN14 family. As to expression, highly expressed in platelets (at protein level).

It localises to the mitochondrion outer membrane. The protein localises to the nucleus. Its function is as follows. Binds directly and specifically 1,2-Diacyl-sn-glycero-3-phospho-(1'-myo-inositol-3',4',5'-bisphosphate) (PIP3) leading to the recruitment of PIP3 to mitochondria and may play a role in the regulation of the platelet activation via AKT/GSK3B/cGMP signaling pathways. May act as transcription factor that regulates SREBP1 (isoform SREBP-1C) expression in order to modulate triglyceride (TG) homeostasis in hepatocytes. The polypeptide is FUN14 domain-containing protein 2 (Homo sapiens (Human)).